We begin with the raw amino-acid sequence, 292 residues long: Potassium channel, subfamily K, member 16 (292 aa).

The Cytoplasmic portion of the chain corresponds to 1-13 (MPRAGVCGCWGGQ). A helical transmembrane segment spans residues 14 to 34 (VLPLLLAYICYLLLGATIFQL). Residues 98 to 116 (SFFFAGTVVTTIGYGNLAP) constitute an intramembrane region (pore-forming). T108, I109, G110, and Y111 together coordinate K(+). The interval 108–113 (TIGYGN) is selectivity filter 1. Residues 120–140 (AGQVFCVFYALMGIPLNVVFL) traverse the membrane as a helical segment. Residues 141–165 (NHLGTGLRAHLTTLDRWEDHPRHSQ) lie on the Cytoplasmic side of the membrane. The chain crosses the membrane as a helical span at residues 166–186 (LLQVLGLALFLTLGTLVILIF). The pore-forming intramembrane region spans 202 to 221 (GFYFAFITLSTIGFGDYVVG). Residues T212, I213, G214, and F215 each contribute to the K(+) site. The interval 212–217 (TIGFGD) is selectivity filter 2. A helical membrane pass occupies residues 238-258 (IWILLGLAWLAVVLSLGSLLL). At 259-292 (HRCSRLWQLIRGLDLKDGAAPDSEPRSQKIPISA) the chain is on the cytoplasmic side.

This sequence belongs to the two pore domain potassium channel (TC 1.A.1.8) family. Homodimer; disulfide-linked. Heterodimer with KCNK17 and KCNK5. As to expression, expressed in pacreatic beta-cells (at protein level). Expressed in pacreatic delta-cells (at protein level).

Its subcellular location is the cell membrane. The protein resides in the endoplasmic reticulum membrane. It localises to the mitochondrion inner membrane. The catalysed reaction is K(+)(in) = K(+)(out). It catalyses the reaction Rb(+)(in) = Rb(+)(out). It carries out the reaction Cs(+)(in) = Cs(+)(out). Its function is as follows. K(+) channel that conducts voltage-dependent outward rectifying currents upon membrane depolarization. Voltage sensing is coupled to K(+) electrochemical gradient in an 'ion flux gating' mode where outward but not inward ion flow opens the gate. Homo- and heterodimerizes to form functional channels with distinct regulatory and gating properties. In pancreatic islets, conducts K(+) countercurrents for Ca(2+) release from the endoplasmic reticulum (ER) and regulates the frequency and duration of cytosolic Ca(2+) oscillations coupled to secretion of pancreatic hormones. In pancreatic beta cells, drives ER Ca(2+) efflux, which in turn activates Ca(2+)-dependent plasma membrane K(+) slow currents and cytosolic Ca(2+) influx, overall contributing to synchronous cytosolic Ca(2+) oscillations. Limits glucose-induced cytosolic Ca(2+) oscillations coupled to second-phase INS secretion. Contributes to beta cell adaptation to acute inflammation by maintaining normal cytosolic Ca(2+) levels and INS secretion. May regulate beta cell mitochondrial Ca(2+) levels either indirectly via ER Ca(2+) efflux or directly by hyperpolarizing the mitochondrial membrane potential. Limits mitochondrial Ca(2+) oscillations and ATP production involved in glucose homeostasis upon metabolic stress. In pancreatic delta cells, limits Ca(2+)-induced Ca(2+)-release involved in somatostatin secretion and modulates islet paracrine signaling involved in glucagon secretion. Permeable to other monovalent cations such as Rb(+) and Cs(+). The protein is Potassium channel, subfamily K, member 16 of Mus musculus (Mouse).